The chain runs to 128 residues: CD59 glycoprotein (128 aa).

The signal sequence occupies residues 1–25 (MGIQGGSVLFGLLLVLAVFCHSGNS). The UPAR/Ly6 domain maps to 26-108 (LQCYSCPYPT…ALKNGGTTLS (83 aa)). 5 disulfide bridges follow: cysteine 28-cysteine 51, cysteine 31-cysteine 38, cysteine 44-cysteine 64, cysteine 70-cysteine 88, and cysteine 89-cysteine 94. N-linked (GlcNAc...) asparagine glycosylation occurs at asparagine 43. Asparagine 102 carries GPI-anchor amidated asparagine lipidation. The propeptide at 103–128 (GGTTLSKKTVLLLVIPFLVAAWSLHP) is removed in mature form.

Interacts with T-cell surface antigen CD2. Post-translationally, N- and O-glycosylated.

The protein resides in the cell membrane. It localises to the secreted. Functionally, potent inhibitor of the complement membrane attack complex (MAC) action, which protects self-cells from damage during complement activation. Acts by binding to the beta-haipins of C8 (C8A and C8B) components of the assembling MAC, forming an intermolecular beta-sheet that prevents incorporation of the multiple copies of C9 required for complete formation of the osmolytic pore. This is CD59 glycoprotein from Aotus trivirgatus (Three-striped night monkey).